Consider the following 346-residue polypeptide: N-acetyl-gamma-glutamyl-phosphate reductase (346 aa).

The active site involves cysteine 149.

This sequence belongs to the NAGSA dehydrogenase family. Type 1 subfamily.

It is found in the cytoplasm. The catalysed reaction is N-acetyl-L-glutamate 5-semialdehyde + phosphate + NADP(+) = N-acetyl-L-glutamyl 5-phosphate + NADPH + H(+). Its pathway is amino-acid biosynthesis; L-arginine biosynthesis; N(2)-acetyl-L-ornithine from L-glutamate: step 3/4. Functionally, catalyzes the NADPH-dependent reduction of N-acetyl-5-glutamyl phosphate to yield N-acetyl-L-glutamate 5-semialdehyde. The polypeptide is N-acetyl-gamma-glutamyl-phosphate reductase (Oceanobacillus iheyensis (strain DSM 14371 / CIP 107618 / JCM 11309 / KCTC 3954 / HTE831)).